The chain runs to 265 residues: Homeobox protein engrailed-2-B (265 aa).

2 stretches are compositionally biased toward basic and acidic residues: residues 1–12 and 102–115; these read MEENEQNNREVE and GEKK…ETLK. Disordered regions lie at residues 1–38, 60–138, and 156–182; these read MEEN…QPHH, INHQ…SSKA, and DRPS…PRTA. Low complexity predominate over residues 122-136; that stretch reads DHSLSSDSDSSQASS. A DNA-binding region (homeobox) is located at residues 176-235; sequence DKRPRTAFTAEQLQRLKAEFQTNRYLTEQRRQSLAQELGLNESQIKIWFQNKRAKIKKST.

This sequence belongs to the engrailed homeobox family.

It is found in the nucleus. This is Homeobox protein engrailed-2-B (en2-b) from Xenopus laevis (African clawed frog).